Reading from the N-terminus, the 1158-residue chain is Transient receptor potential cation channel subfamily M member 5 (1158 aa).

The Cytoplasmic portion of the chain corresponds to 1–729; sequence MQTTQSSCPG…LTRWRKFWGA (729 aa). Position 129 is a phosphoserine; by PKC (Ser129). Residues Cys341, Asp350, Asp353, and Glu354 each coordinate Ca(2+). Residues 488–507 are disordered; sequence GRRMEERGPPKRPAGQKWLP. A coiled-coil region spans residues 552 to 572; the sequence is KIIKEMSHLEKEAEVARTMRE. A helical transmembrane segment spans residues 730–754; it reads PVTVFLGNVVMYFAFLFLFTYVLLV. The Extracellular portion of the chain corresponds to 755-764; that stretch reads DFRPPPQGPS. Residues 765-784 form a helical membrane-spanning segment; it reads GSEVTLYFWVFTLVLEEIRQ. Glu781 and Gln784 together coordinate Ca(2+). Residues 785-805 lie on the Cytoplasmic side of the membrane; that stretch reads GFFTDEDTHLVKKFTLYVEDN. A helical transmembrane segment spans residues 806-824; sequence WNKCDMVAIFLFIVGVTCR. Residues Asn807 and Asp810 each coordinate Ca(2+). The Extracellular portion of the chain corresponds to 825-831; that stretch reads MVPSVFE. The helical transmembrane segment at 832-854 threads the bilayer; sequence AGRTVLAIDFMVFTLRLIHIFAI. Over 855-863 the chain is Cytoplasmic; it reads HKQLGPKII. The chain crosses the membrane as a helical span at residues 864-893; that stretch reads IVERMMKDVFFFLFFLSVWLVAYGVTTQAL. Residues 894–902 are Extracellular-facing; the sequence is LHPHDGRLE. An intramembrane region (pore-forming) is located at residues 903–938; sequence WIFRRVLYRPYLQIFGQIPLDEIDEARVNCSLHPLL. Positions 917–919 match the Selectivity filter motif; that stretch reads FGQ. Residues 939–950 are Extracellular-facing; the sequence is LESSASCPNLYA. Residues 951-985 form a helical membrane-spanning segment; the sequence is NWLVILLLVTFLLVTNVLLMNLLIAMFSYTFQVVQ. Residues 986–1158 are Cytoplasmic-facing; the sequence is GNADMFWKFQ…LESGLPPSDT (173 aa). Glu1002 is a Ca(2+) binding site. The segment covering 1127–1141 has biased composition (polar residues); sequence TYSSSQNCGCRSQPA. Residues 1127-1158 form a disordered region; sequence TYSSSQNCGCRSQPASARDREYLESGLPPSDT.

It belongs to the transient receptor (TC 1.A.4) family. LTrpC subfamily. TRPM5 sub-subfamily. Homotetramer. In terms of processing, multiple phosphorylation sites regulate the Gq/ TRPM5 modulation axis, with the Ser-129 playing a substantial role in this positive modulation. As to expression, strongly expressed in liver, heart, testis, brain and kidney. Detected in fetal liver, kidney, spleen, brain, heart and lung, and in adult skin, eyes, spleen, stomach, small intestine, colon, lung, bladder, pancreas and thymus. Biallelically expressed at all stages and tissues examined. Also expressed in subsets of taste receptor cells of the tongue, in olfactory sensory neurons of the main olfactory epithelium and in the vomeronasal organ.

The protein localises to the cell membrane. It carries out the reaction Na(+)(in) = Na(+)(out). It catalyses the reaction K(+)(in) = K(+)(out). Ca(2+)-activated cation channel. Displays voltage dependence modulation. Regulated by PI(4,5)P2 levels. PI(4,5)P 2 reverses the Ca(2+) -induced desensitization of channels. Inhibited by flufenamic acid with an IC(50) of 24.5 uM and spermine with an IC(50) of 37 uM. Is a highly temperature-sensitive, heat activated channel showing a steep increase of inward currents at temperatures between 15 and 35 degrees Celsius. Heat activation is due to a shift of the voltage-dependent activation curve to negative potentials. The channel is blocked by extracellular acidification. Its function is as follows. Monovalent cation-selective ion channel activated by intracellular Ca(2+) in a voltage- and temperature-dependent manner. Mediates the transport of Na(+), K(+) and Cs(+) ions equally well. Activated directly by increase in intracellular Ca(2+), but is impermeable to it. The activation mechanism of TRPM5 involves a multistep process. TRPM5 activation involves ligand binding (i.e., tastant molecule, glucose stimulation) to Gq/G-protein coupled receptors (GPCR) and leads to the breakdown of phosphatidylinositol bisphosphate (PIP2) into diacylglycerol (DAG) and inositol trisphosphate (IP3), IP3 binds to its receptors in the endoplasmic reticulum and cause Ca(2+) release. Simultaneously with the intracellular Ca(2+) release, DAG activates the protein kinase C (PKC), which phosphorylates the TRPM5 channel. This phosphorylation combined with the bound Ca(2+), leads to a robust inward current allowing the entry of sodium ions (Na+) into the cell. This ion influx depolarizes the cell membrane, generating action potentials that propagate TRPM5 signals. Is a key player in sensing sweet, umami and bitter stimuli. May also be involved in sensing semiochemicals. Involved in insulin secretion by pancreatic beta cells. The protein is Transient receptor potential cation channel subfamily M member 5 of Mus musculus (Mouse).